The primary structure comprises 255 residues: Syntaxin-6 (255 aa).

Position 2 is an N-acetylserine (Ser2). Phosphoserine is present on Ser2. The segment at Ser2–Gln168 is required for interaction with VPS51. The Cytoplasmic segment spans residues Ser2–Gln234. Residues Glu41–Asn74 are a coiled coil. Phosphoserine is present on residues Ser129 and Ser152. The 63-residue stretch at Gln163–Val225 folds into the t-SNARE coiled-coil homology domain. Residues Trp235–Leu255 form a helical; Anchor for type IV membrane protein membrane-spanning segment.

Belongs to the syntaxin family. Identified in a complex containing STX6, STX12, VAMP4 and VTI1A. Binds EEA1. Interacts with VPS45A. Interacts with MARCHF2; the interaction promotes MARCHF2-mediated ubiquitination and degradation of CFTR. Interacts with MARCHF3. Interacts with GOPC. Interacts with BLTP3B (via C-terminal coiled-coil domain). Interacts with BAIAP3; this interaction is increased in the presence of calcium. Interacts with VPS13B.

The protein localises to the golgi apparatus membrane. The protein resides in the golgi apparatus. It is found in the trans-Golgi network membrane. It localises to the recycling endosome membrane. SNARE promoting movement of transport vesicles to target membranes. Targets endosomes to the trans-Golgi network, and may therefore function in retrograde trafficking. Together with SNARE STX12, promotes movement of vesicles from endosomes to the cell membrane, and may therefore function in the endocytic recycling pathway. This Homo sapiens (Human) protein is Syntaxin-6 (STX6).